Consider the following 705-residue polypeptide: Gamma-adducin (705 aa).

Residues methionine 1–isoleucine 10 are compositionally biased toward polar residues. Residues methionine 1 to glutamate 22 are disordered. An N-acetylserine modification is found at serine 2. 8 positions are modified to phosphoserine: serine 31, serine 42, serine 64, serine 402, serine 414, serine 423, serine 442, and serine 461. 4 disordered regions span residues glutamate 472–asparagine 495, proline 535–histidine 556, lysine 572–histidine 612, and glutamate 658–alanine 705. A Glycyl lysine isopeptide (Lys-Gly) (interchain with G-Cter in SUMO2) cross-link involves residue lysine 484. 7 positions are modified to phosphoserine: serine 583, serine 585, serine 590, serine 672, serine 676, serine 678, and serine 680. Residues serine 590–proline 605 show a composition bias toward low complexity. Positions proline 681 to alanine 705 are enriched in basic residues. Phosphoserine; by PKC is present on serine 682. An interaction with calmodulin region spans residues lysine 683 to lysine 700.

It belongs to the aldolase class II family. Adducin subfamily. In terms of assembly, heterodimer of an alpha and a gamma subunit. Sumoylated. Post-translationally, proteolytically cleaved by asparagine endopeptidase (AEP) into 2 fragments. Overexpression of the 1-357 fragment induces neuronal apoptosis, and overexpression of either 1-357 or 358-706 fragment increases the degeneration of dendritic spines. Overexpression of the 1-357 fragment impairs neurite outgrowth by downregulating the expression of Rac2, and induces synaptic dysfunction and cognitive impairments in tau P301S transgenic mice, a mouse model for Alzheimer disease (AD). Expressed in kidney, brain, spleen, liver and heart. In terms of tissue distribution, expressed in renal interlobular arteries, afferent/efferent arterioles, parietal glomerular epithelial cells and microvilli of the luminal surface of the proximal tubule (at protein level). Expressed in podocytes (at protein level) Expressed in renal cortex (at protein level). Expressed in primary vascular smooth muscle cells (VSMCs) of the kidney (at protein level). Expressed in tubular cells and glomeruli (at protein level).

The protein resides in the cytoplasm. It localises to the cytoskeleton. Its subcellular location is the cell membrane. In terms of biological role, membrane-cytoskeleton-associated protein that promotes the assembly of the spectrin-actin network. Plays a role in actin filament capping. Binds to calmodulin. Involved in myogenic reactivity of the renal afferent arteriole (Af-art), renal interlobular arteries and middle cerebral artery (MCA) to increased perfusion pressure. Involved in regulation of potassium channels in the vascular smooth muscle cells (VSMCs) of the Af-art and MCA ex vivo. Involved in regulation of glomerular capillary pressure, glomerular filtration rate (GFR) and glomerular nephrin expression in response to hypertension. Involved in renal blood flow (RBF) autoregulation. Plays a role in podocyte structure and function. Regulates globular monomer actin (G-actin) and filamentous polymer actin (F-actin) ratios in the primary podocytes affecting actin cytoskeleton organization. Regulates expression of synaptopodin, RhoA, Rac1 and CDC42 in the renal cortex and the primary podocytes. Regulates expression of nephrin in the glomeruli and in the primary podocytes, expression of nephrin and podocinin in the renal cortex, and expression of focal adhesion proteins integrin alpha-3 and integrin beta-1 in the glomeruli. Involved in cell migration and cell adhesion of podocytes, and in podocyte foot process effacement. Regulates expression of profibrotics markers MMP2, MMP9, TGF beta-1, tubular tight junction protein E-cadherin, and mesenchymal markers vimentin and alpha-SMA. Promotes the growth of neurites. The sequence is that of Gamma-adducin (Add3) from Rattus norvegicus (Rat).